The sequence spans 294 residues: Protein RarD (294 aa).

At 1–11 (MDAKQTRQGVL) the chain is on the cytoplasmic side. The chain crosses the membrane as a helical span at residues 12-34 (LALAAYFIWGIAPAYFKLIYYVP). The EamA domain maps to 18 to 145 (FIWGIAPAYF…AVCGVLVQLW (128 aa)). Over 35–37 (ADE) the chain is Periplasmic. Residues 38-60 (ILTHRVIWSFFFMVALLSVSRQW) traverse the membrane as a helical segment. At 61–72 (RQVKRLLKTPKK) the chain is on the cytoplasmic side. Residues 73–95 (IFLLALSAVLVGGNWLLFIWAVN) traverse the membrane as a helical segment. Residues 96–99 (NHHM) lie on the Periplasmic side of the membrane. A helical transmembrane segment spans residues 100–122 (LEASLGYFINPLVNILLGMIFLG). The Cytoplasmic portion of the chain corresponds to 123 to 128 (ERFRRM). The chain crosses the membrane as a helical span at residues 129–146 (QWLAVILAVCGVLVQLWT). Residues 147-149 (FGS) are Periplasmic-facing. A helical membrane pass occupies residues 150 to 167 (LPIIALGLAFSFAFYGLV). The Cytoplasmic portion of the chain corresponds to 168–179 (RKKIAVEAQTGM). Residues 180–197 (LVETLWLLPVAAIYLFSI) traverse the membrane as a helical segment. Topologically, residues 198 to 211 (ADSATSHMGQNALS) are periplasmic. Residues 212–234 (LNLLLMAAGVVTTIPLLCFTGAA) form a helical membrane-spanning segment. Residues 235–238 (TRLR) are Cytoplasmic-facing. A helical membrane pass occupies residues 239-261 (LSTLGFFQYIGPTLMFLLAVTFY). Over 262–270 (GEVPGADKM) the chain is Periplasmic. The chain crosses the membrane as a helical span at residues 271 to 290 (VTFAFIWVALAIFVMDAIYT). Over 291-294 (QRKK) the chain is Cytoplasmic.

The protein belongs to the EamA transporter family.

Its subcellular location is the cell inner membrane. This Salmonella typhi protein is Protein RarD (rarD).